The primary structure comprises 481 residues: Protein nucleotidyltransferase YdiU (481 aa).

Residues Gly-85, Gly-87, Arg-88, Lys-108, Asp-120, Gly-121, Arg-172, and Arg-179 each coordinate ATP. Catalysis depends on Asp-248, which acts as the Proton acceptor. Mg(2+)-binding residues include Asn-249 and Asp-258. Asp-258 is an ATP binding site.

Belongs to the SELO family. The cofactor is Mg(2+). Mn(2+) is required as a cofactor.

The enzyme catalyses L-seryl-[protein] + ATP = 3-O-(5'-adenylyl)-L-seryl-[protein] + diphosphate. The catalysed reaction is L-threonyl-[protein] + ATP = 3-O-(5'-adenylyl)-L-threonyl-[protein] + diphosphate. It catalyses the reaction L-tyrosyl-[protein] + ATP = O-(5'-adenylyl)-L-tyrosyl-[protein] + diphosphate. It carries out the reaction L-histidyl-[protein] + UTP = N(tele)-(5'-uridylyl)-L-histidyl-[protein] + diphosphate. The enzyme catalyses L-seryl-[protein] + UTP = O-(5'-uridylyl)-L-seryl-[protein] + diphosphate. The catalysed reaction is L-tyrosyl-[protein] + UTP = O-(5'-uridylyl)-L-tyrosyl-[protein] + diphosphate. Functionally, nucleotidyltransferase involved in the post-translational modification of proteins. It can catalyze the addition of adenosine monophosphate (AMP) or uridine monophosphate (UMP) to a protein, resulting in modifications known as AMPylation and UMPylation. The protein is Protein nucleotidyltransferase YdiU of Cereibacter sphaeroides (strain ATCC 17029 / ATH 2.4.9) (Rhodobacter sphaeroides).